Consider the following 356-residue polypeptide: Cytochrome b translation regulator cbp7 (356 aa).

As to quaternary structure, component of a complex, at least composed of cbp7 and cbp8.

Its subcellular location is the mitochondrion. In terms of biological role, translation factor for cob1/cytochrome b; plays a role in cob1 mRNA stabilization and required for correct folding of the protein. In Schizosaccharomyces pombe (strain 972 / ATCC 24843) (Fission yeast), this protein is Cytochrome b translation regulator cbp7.